Reading from the N-terminus, the 122-residue chain is Large ribosomal subunit protein bL12 (122 aa).

This sequence belongs to the bacterial ribosomal protein bL12 family. Homodimer. Part of the ribosomal stalk of the 50S ribosomal subunit. Forms a multimeric L10(L12)X complex, where L10 forms an elongated spine to which 2 to 4 L12 dimers bind in a sequential fashion. Binds GTP-bound translation factors.

Forms part of the ribosomal stalk which helps the ribosome interact with GTP-bound translation factors. Is thus essential for accurate translation. The sequence is that of Large ribosomal subunit protein bL12 from Sodalis glossinidius (strain morsitans).